The following is a 160-amino-acid chain: Large ribosomal subunit protein eL21 (160 aa).

Basic and acidic residues-rich tracts occupy residues 112 to 123 (NDQKKKEAKEKG) and 136 to 145 (REAHFVRTNG). The segment at 112–145 (NDQKKKEAKEKGTWVQLKRQPAPPREAHFVRTNG) is disordered.

This sequence belongs to the eukaryotic ribosomal protein eL21 family. As to quaternary structure, component of the large ribosomal subunit.

The protein resides in the cytoplasm. Its subcellular location is the cytosol. It localises to the endoplasmic reticulum. In terms of biological role, component of the large ribosomal subunit. The ribosome is a large ribonucleoprotein complex responsible for the synthesis of proteins in the cell. This Mus musculus (Mouse) protein is Large ribosomal subunit protein eL21.